A 615-amino-acid polypeptide reads, in one-letter code: Dihydroxy-acid dehydratase (615 aa).

Aspartate 81 provides a ligand contact to Mg(2+). A [2Fe-2S] cluster-binding site is contributed by cysteine 122. Residues aspartate 123 and lysine 124 each contribute to the Mg(2+) site. Lysine 124 is modified (N6-carboxylysine). Residue cysteine 197 coordinates [2Fe-2S] cluster. Glutamate 494 provides a ligand contact to Mg(2+). The Proton acceptor role is filled by serine 520.

It belongs to the IlvD/Edd family. Homodimer. Requires [2Fe-2S] cluster as cofactor. Mg(2+) is required as a cofactor.

The enzyme catalyses (2R)-2,3-dihydroxy-3-methylbutanoate = 3-methyl-2-oxobutanoate + H2O. It catalyses the reaction (2R,3R)-2,3-dihydroxy-3-methylpentanoate = (S)-3-methyl-2-oxopentanoate + H2O. It participates in amino-acid biosynthesis; L-isoleucine biosynthesis; L-isoleucine from 2-oxobutanoate: step 3/4. Its pathway is amino-acid biosynthesis; L-valine biosynthesis; L-valine from pyruvate: step 3/4. Its function is as follows. Functions in the biosynthesis of branched-chain amino acids. Catalyzes the dehydration of (2R,3R)-2,3-dihydroxy-3-methylpentanoate (2,3-dihydroxy-3-methylvalerate) into 2-oxo-3-methylpentanoate (2-oxo-3-methylvalerate) and of (2R)-2,3-dihydroxy-3-methylbutanoate (2,3-dihydroxyisovalerate) into 2-oxo-3-methylbutanoate (2-oxoisovalerate), the penultimate precursor to L-isoleucine and L-valine, respectively. This chain is Dihydroxy-acid dehydratase, found in Salinispora arenicola (strain CNS-205).